The following is a 207-amino-acid chain: Small ribosomal subunit protein uS4 (207 aa).

The tract at residues 31–51 (KCKLDSKPGQHGRTSGARTSD) is disordered. Positions 97–162 (SRLDNVVYRM…QGRIRESLDL (66 aa)) constitute an S4 RNA-binding domain.

It belongs to the universal ribosomal protein uS4 family. Part of the 30S ribosomal subunit. Contacts protein S5. The interaction surface between S4 and S5 is involved in control of translational fidelity.

One of the primary rRNA binding proteins, it binds directly to 16S rRNA where it nucleates assembly of the body of the 30S subunit. In terms of biological role, with S5 and S12 plays an important role in translational accuracy. The protein is Small ribosomal subunit protein uS4 of Bordetella bronchiseptica (strain ATCC BAA-588 / NCTC 13252 / RB50) (Alcaligenes bronchisepticus).